A 238-amino-acid chain; its full sequence is Ribonuclease HII (238 aa).

Residues 23–215 (QRLCGVDEAG…VREALARLPM (193 aa)) form the RNase H type-2 domain. A divalent metal cation-binding residues include Asp-29, Glu-30, and Asp-124.

Belongs to the RNase HII family. Mn(2+) is required as a cofactor. Mg(2+) serves as cofactor.

It is found in the cytoplasm. The enzyme catalyses Endonucleolytic cleavage to 5'-phosphomonoester.. Endonuclease that specifically degrades the RNA of RNA-DNA hybrids. In Cupriavidus necator (strain ATCC 17699 / DSM 428 / KCTC 22496 / NCIMB 10442 / H16 / Stanier 337) (Ralstonia eutropha), this protein is Ribonuclease HII.